Consider the following 151-residue polypeptide: U1 small nuclear ribonucleoprotein C (151 aa).

The Matrin-type zinc finger occupies 4 to 36 (FYCEYCSIYLTHSSPAGRKQHSQGRKHISAKVE).

This sequence belongs to the U1 small nuclear ribonucleoprotein C family. In terms of assembly, U1 snRNP is composed of the 7 core Sm proteins B/B', D1, D2, D3, E, F and G that assemble in a heptameric protein ring on the Sm site of the small nuclear RNA to form the core snRNP, and at least 3 U1 snRNP-specific proteins U1-70K, U1-A and U1-C. U1-C interacts with U1 snRNA and the 5' splice-site region of the pre-mRNA.

It localises to the nucleus. In terms of biological role, component of the spliceosomal U1 snRNP, which is essential for recognition of the pre-mRNA 5' splice-site and the subsequent assembly of the spliceosome. U1-C is directly involved in initial 5' splice-site recognition for both constitutive and regulated alternative splicing. The interaction with the 5' splice-site seems to precede base-pairing between the pre-mRNA and the U1 snRNA. Stimulates commitment or early (E) complex formation by stabilizing the base pairing of the 5' end of the U1 snRNA and the 5' splice-site region. The polypeptide is U1 small nuclear ribonucleoprotein C (Theileria annulata).